The chain runs to 1069 residues: Acyl-CoA dehydrogenase family member 10 (1069 aa).

Lys413 carries the N6-succinyllysine modification. Lys427 is modified (N6-acetyllysine; alternate). An N6-succinyllysine; alternate modification is found at Lys427. Residues 792–802, Ser828, Arg943, Gln1013, and Glu1044 each bind FAD; that span reads FAMTEPQVASS. N6-acetyllysine; alternate is present on Lys1052. Lys1052 is modified (N6-succinyllysine; alternate).

It belongs to the acyl-CoA dehydrogenase family. It depends on FAD as a cofactor.

The catalysed reaction is a 2,3-saturated acyl-CoA + A = a 2,3-dehydroacyl-CoA + AH2. Functionally, acyl-CoA dehydrogenase only active with R- and S-2-methyl-C15-CoA. In Mus musculus (Mouse), this protein is Acyl-CoA dehydrogenase family member 10 (Acad10).